The primary structure comprises 146 residues: Large ribosomal subunit protein uL11 (146 aa).

It belongs to the universal ribosomal protein uL11 family. In terms of assembly, part of the ribosomal stalk of the 50S ribosomal subunit. Interacts with L10 and the large rRNA to form the base of the stalk. L10 forms an elongated spine to which L12 dimers bind in a sequential fashion forming a multimeric L10(L12)X complex. In terms of processing, one or more lysine residues are methylated.

Forms part of the ribosomal stalk which helps the ribosome interact with GTP-bound translation factors. The chain is Large ribosomal subunit protein uL11 from Buchnera aphidicola subsp. Baizongia pistaciae (strain Bp).